The following is a 381-amino-acid chain: MRRGIIVEKNKKFVTLLTPDGQFLKAKNDRHSYEIGEEIMLPSETRMGRRASFFDFFKLRPFKMGIFTMTAIMLFIFIVLPVFSNNKAYAYMTIDINPSVEMALNSDYEVIELTPLNDEGQKVVNDIDDWEKTDFKKVIDDIITDCSEHGYVKKSKEILISTVYENTEDNTYKKAVKKQLNDVTEKYKTTYRMESLESDMQTREKAKKEGVSTGSYIKSNEKNDNKDIKDDSSKPSGEEDQKSDENEDENTDQTDTQDSKQGDNEQLNDADSGDQKEEKADDQIDDSDKDKKIKESDENTNTEKDGDHEQTPIQDPQDKGNENNGADKGQSQYHRDWNNGEQGKNRSSSRRDNASDRRNPNGYSSDNHSAKNEDSPSAPGE.

Topologically, residues 1–63 (MRRGIIVEKN…FDFFKLRPFK (63 aa)) are cytoplasmic. The 49-residue stretch at 2 to 50 (RRGIIVEKNKKFVTLLTPDGQFLKAKNDRHSYEIGEEIMLPSETRMGRR) folds into the RsgI N-terminal anti-sigma domain. Residues 64–84 (MGIFTMTAIMLFIFIVLPVFS) traverse the membrane as a helical segment. The Extracellular segment spans residues 85-381 (NNKAYAYMTI…NEDSPSAPGE (297 aa)). A disordered region spans residues 198–381 (SDMQTREKAK…NEDSPSAPGE (184 aa)). 4 stretches are compositionally biased toward basic and acidic residues: residues 200–210 (MQTREKAKKEG), 219–244 (SNEKNDNKDIKDDSSKPSGEEDQKSD), 273–321 (GDQK…DKGN), and 349–359 (SRRDNASDRRN).

In terms of assembly, interacts (via RsgI N-terminal anti-sigma domain) with SigI.

The protein localises to the cell membrane. Functionally, anti-sigma factor for SigI. Negatively regulates SigI activity through direct interaction. The polypeptide is Anti-sigma-I factor RsgI (Bacillus subtilis (strain 168)).